The chain runs to 475 residues: Chromosomal replication initiator protein DnaA (475 aa).

The tract at residues 1–73 (MTNSEQERWS…LSCWQAEMPE (73 aa)) is domain I, interacts with DnaA modulators. The tract at residues 73-131 (EVHRIDLSVRTAMRCATPAKEAPVAVEARRAERGDAKPADTRAPVMTPVAASHDALGGS) is domain II. The interval 132–354 (PLDPRLTFAS…GAINRLLAHS (223 aa)) is domain III, AAA+ region. ATP contacts are provided by glycine 179, glycine 181, lysine 182, and threonine 183. The interval 355 to 475 (KLNNQPVTLD…VEALKRQLQD (121 aa)) is domain IV, binds dsDNA.

This sequence belongs to the DnaA family. In terms of assembly, oligomerizes as a right-handed, spiral filament on DNA at oriC.

The protein localises to the cytoplasm. In terms of biological role, plays an essential role in the initiation and regulation of chromosomal replication. ATP-DnaA binds to the origin of replication (oriC) to initiate formation of the DNA replication initiation complex once per cell cycle. Binds the DnaA box (a 9 base pair repeat at the origin) and separates the double-stranded (ds)DNA. Forms a right-handed helical filament on oriC DNA; dsDNA binds to the exterior of the filament while single-stranded (ss)DNA is stabiized in the filament's interior. The ATP-DnaA-oriC complex binds and stabilizes one strand of the AT-rich DNA unwinding element (DUE), permitting loading of DNA polymerase. After initiation quickly degrades to an ADP-DnaA complex that is not apt for DNA replication. Binds acidic phospholipids. This chain is Chromosomal replication initiator protein DnaA, found in Bradyrhizobium sp. (strain BTAi1 / ATCC BAA-1182).